Reading from the N-terminus, the 529-residue chain is Phenylalanine N-monooxygenase (529 aa).

A helical membrane pass occupies residues 1–21 (MLDSTPMLAFIIGLLLLALTM). Cys467 serves as a coordination point for heme.

It belongs to the cytochrome P450 family. Requires heme as cofactor.

It is found in the endoplasmic reticulum membrane. The enzyme catalyses L-phenylalanine + 2 reduced [NADPH--hemoprotein reductase] + 2 O2 = (E)-phenylacetaldehyde oxime + 2 oxidized [NADPH--hemoprotein reductase] + CO2 + 3 H2O + 2 H(+). It functions in the pathway secondary metabolite biosynthesis; phenylglucosinolate biosynthesis. Functionally, converts L-phenylalanine into phenylacetaldoxime, the precursor of benzylglucosinolate (glucotropeolin). This chain is Phenylalanine N-monooxygenase (CYP79A2), found in Arabidopsis thaliana (Mouse-ear cress).